Consider the following 166-residue polypeptide: Sec-independent protein translocase protein TatB (166 aa).

The chain crosses the membrane as a helical span at residues 2-22 (FDGIGFMELLLIGVLGLVVLG). The disordered stretch occupies residues 69–166 (SKGLSNLSPE…DTRSNPKANG (98 aa)). Composition is skewed to polar residues over residues 88–97 (QAAQSVNRPY) and 112–132 (QIHSPVASTVQTSPAQASQAN). Over residues 133-153 (PTATVEASPTSASPATPSEPS) the composition is skewed to low complexity. Residues 155-166 (GADTRSNPKANG) show a composition bias toward polar residues.

It belongs to the TatB family. As to quaternary structure, the Tat system comprises two distinct complexes: a TatABC complex, containing multiple copies of TatA, TatB and TatC subunits, and a separate TatA complex, containing only TatA subunits. Substrates initially bind to the TatABC complex, which probably triggers association of the separate TatA complex to form the active translocon.

It localises to the cell inner membrane. Its function is as follows. Part of the twin-arginine translocation (Tat) system that transports large folded proteins containing a characteristic twin-arginine motif in their signal peptide across membranes. Together with TatC, TatB is part of a receptor directly interacting with Tat signal peptides. TatB may form an oligomeric binding site that transiently accommodates folded Tat precursor proteins before their translocation. This Shewanella baltica (strain OS223) protein is Sec-independent protein translocase protein TatB.